Reading from the N-terminus, the 183-residue chain is Oligoribonuclease (183 aa).

Residues leucine 9–leucine 172 form the Exonuclease domain. Residue tyrosine 130 is part of the active site.

This sequence belongs to the oligoribonuclease family.

The protein localises to the cytoplasm. Its function is as follows. 3'-to-5' exoribonuclease specific for small oligoribonucleotides. This chain is Oligoribonuclease, found in Acinetobacter baylyi (strain ATCC 33305 / BD413 / ADP1).